The sequence spans 450 residues: NADH-quinone oxidoreductase subunit H (450 aa).

Helical transmembrane passes span W18–L38, I91–G111, L128–L148, V169–T189, H201–G221, V262–L282, W292–L312, F324–A344, and S358–K378. Residues A387–D450 are disordered. Basic and acidic residues predominate over residues K390–L400. The segment covering V433 to D450 has biased composition (polar residues).

It belongs to the complex I subunit 1 family. As to quaternary structure, NDH-1 is composed of 14 different subunits. Subunits NuoA, H, J, K, L, M, N constitute the membrane sector of the complex.

It is found in the cell membrane. It catalyses the reaction a quinone + NADH + 5 H(+)(in) = a quinol + NAD(+) + 4 H(+)(out). Functionally, NDH-1 shuttles electrons from NADH, via FMN and iron-sulfur (Fe-S) centers, to quinones in the respiratory chain. The immediate electron acceptor for the enzyme in this species is believed to be ubiquinone. Couples the redox reaction to proton translocation (for every two electrons transferred, four hydrogen ions are translocated across the cytoplasmic membrane), and thus conserves the redox energy in a proton gradient. This subunit may bind ubiquinone. The chain is NADH-quinone oxidoreductase subunit H from Rhodococcus jostii (strain RHA1).